The chain runs to 344 residues: Methionine import ATP-binding protein MetN 1 (344 aa).

The 240-residue stretch at 2–241 (IELRNLSQRF…PHHEVTRALI (240 aa)) folds into the ABC transporter domain. 38-45 (GRSGAGKS) serves as a coordination point for ATP.

The protein belongs to the ABC transporter superfamily. Methionine importer (TC 3.A.1.24) family. The complex is composed of two ATP-binding proteins (MetN), two transmembrane proteins (MetI) and a solute-binding protein (MetQ).

Its subcellular location is the cell inner membrane. The enzyme catalyses L-methionine(out) + ATP + H2O = L-methionine(in) + ADP + phosphate + H(+). It catalyses the reaction D-methionine(out) + ATP + H2O = D-methionine(in) + ADP + phosphate + H(+). In terms of biological role, part of the ABC transporter complex MetNIQ involved in methionine import. Responsible for energy coupling to the transport system. This Burkholderia orbicola (strain AU 1054) protein is Methionine import ATP-binding protein MetN 1.